Here is a 217-residue protein sequence, read N- to C-terminus: Heart- and neural crest derivatives-expressed protein 2 (217 aa).

The segment at 76–116 (DHSHYGGVPPGAGPPGLGGPRPVKRRGTANRKERRRTQSIN) is disordered. The segment covering 83 to 94 (VPPGAGPPGLGG) has biased composition (gly residues). Residues 97–112 (PVKRRGTANRKERRRT) show a composition bias toward basic residues. Positions 99-151 (KRRGTANRKERRRTQSINSAFAELRECIPNVPADTKLSKIKTLRLATSYIAYL) constitute a bHLH domain.

In terms of assembly, efficient DNA binding requires dimerization with another bHLH protein. Forms homodimers and heterodimers with TCF3 gene products E12 and E47, HAND1 and HEY1, HEY2 and HEYL (hairy-related transcription factors).

The protein localises to the nucleus. Essential for cardiac morphogenesis, particularly for the formation of the right ventricle and of the aortic arch arteries. Required for vascular development and regulation of angiogenesis, possibly through a VEGF signaling pathway. Also plays an important role in limb development, particularly in the establishment of anterior-posterior polarization, acting as an upstream regulator of sonic hedgehog (SHH) induction in the limb bud. Is involved in the development of branchial arches, which give rise to unique structures in the head and neck. Binds DNA on E-box consensus sequence 5'-CANNTG-3'. This Rattus norvegicus (Rat) protein is Heart- and neural crest derivatives-expressed protein 2 (Hand2).